A 590-amino-acid chain; its full sequence is Aspartate--tRNA(Asp/Asn) ligase (590 aa).

Residue glutamate 178 participates in L-aspartate binding. The tract at residues 202 to 205 (QIYK) is aspartate. An L-aspartate-binding site is contributed by arginine 224. ATP contacts are provided by residues 224 to 226 (RDE) and glutamine 233. Histidine 453 is a binding site for L-aspartate. Glutamate 487 serves as a coordination point for ATP. Arginine 494 contributes to the L-aspartate binding site. An ATP-binding site is contributed by 539–542 (GLDR).

The protein belongs to the class-II aminoacyl-tRNA synthetase family. Type 1 subfamily. Homodimer.

The protein resides in the cytoplasm. The catalysed reaction is tRNA(Asx) + L-aspartate + ATP = L-aspartyl-tRNA(Asx) + AMP + diphosphate. In terms of biological role, aspartyl-tRNA synthetase with relaxed tRNA specificity since it is able to aspartylate not only its cognate tRNA(Asp) but also tRNA(Asn). Reaction proceeds in two steps: L-aspartate is first activated by ATP to form Asp-AMP and then transferred to the acceptor end of tRNA(Asp/Asn). The protein is Aspartate--tRNA(Asp/Asn) ligase of Treponema denticola (strain ATCC 35405 / DSM 14222 / CIP 103919 / JCM 8153 / KCTC 15104).